Here is a 317-residue protein sequence, read N- to C-terminus: o-succinylbenzoate synthase (317 aa).

Residues 71-73 (NAT) and lysine 95 contribute to the 2-succinylbenzoate site. Lysine 97 functions as the Proton donor in the catalytic mechanism. Positions 128, 154, and 177 each coordinate Mg(2+). Residue 128 to 130 (DVN) participates in 2-succinylbenzoate binding. Residue lysine 201 participates in 2-succinylbenzoate binding. Catalysis depends on lysine 201, which acts as the Proton acceptor.

It belongs to the mandelate racemase/muconate lactonizing enzyme family. MenC type 1 subfamily. As to quaternary structure, monomer. Requires a divalent metal cation as cofactor.

The enzyme catalyses (1R,6R)-6-hydroxy-2-succinyl-cyclohexa-2,4-diene-1-carboxylate = 2-succinylbenzoate + H2O. The protein operates within quinol/quinone metabolism; 1,4-dihydroxy-2-naphthoate biosynthesis; 1,4-dihydroxy-2-naphthoate from chorismate: step 4/7. It participates in quinol/quinone metabolism; menaquinone biosynthesis. Its function is as follows. Converts 2-succinyl-6-hydroxy-2,4-cyclohexadiene-1-carboxylate (SHCHC) to 2-succinylbenzoate (OSB). Does not show N-succinylamino acid racemase (NSAR) activity with N-succinyl-L-phenylglycine as substrate. The protein is o-succinylbenzoate synthase of Thermobifida fusca (strain YX).